The following is a 91-amino-acid chain: Small ribosomal subunit protein uS17 (91 aa).

Belongs to the universal ribosomal protein uS17 family. In terms of assembly, part of the 30S ribosomal subunit.

One of the primary rRNA binding proteins, it binds specifically to the 5'-end of 16S ribosomal RNA. In Salinispora tropica (strain ATCC BAA-916 / DSM 44818 / JCM 13857 / NBRC 105044 / CNB-440), this protein is Small ribosomal subunit protein uS17.